The sequence spans 118 residues: Beta-elicitin cryptogein (118 aa).

Positions 1–20 (MNFTALLAAVAAALVGSANA) are cleaved as a signal peptide. 3 disulfide bridges follow: Cys23-Cys91, Cys47-Cys76, and Cys71-Cys115.

This sequence belongs to the elicitin family.

It localises to the secreted. Its function is as follows. Induces local and distal defense responses (incompatible hypersensitive reaction) in plants from the solanaceae and cruciferae families. Elicits leaf necrosis and causes the accumulation of pathogenesis-related proteins. Might interact with the lipidic molecules of the plasma membrane. This is Beta-elicitin cryptogein from Phytophthora cryptogea.